The following is a 223-amino-acid chain: uncharacterized protein (223 aa).

An N-terminal signal peptide occupies residues 1 to 17 (MLGQGLIFISLAFVAHA). Asn58 carries N-linked (GlcNAc...) asparagine glycosylation. The interval 149 to 188 (VRKKGSRPSKPQKEKQGNKQGSKTEESPNVDEDELESEPE) is disordered. Positions 159 to 174 (PQKEKQGNKQGSKTEE) are enriched in basic and acidic residues. Over residues 176–187 (PNVDEDELESEP) the composition is skewed to acidic residues. The chain crosses the membrane as a helical span at residues 191 to 211 (TFFQKYGLYLIPILFLIIMSG).

The protein resides in the endoplasmic reticulum membrane. This is an uncharacterized protein from Schizosaccharomyces pombe (strain 972 / ATCC 24843) (Fission yeast).